Consider the following 130-residue polypeptide: Fluoride-specific ion channel FluC (130 aa).

Helical transmembrane passes span 3–23 (LVFLWAALGGAIGSSLRYFVG), 38–58 (LGTFSVNLIGCFIIGFMGHLA), 67–87 (FGIFFVTGVLGGFTTFSSYGL), and 102–122 (ISYVLGTNLLGLIGVAIGWFL). Residues Gly-77 and Thr-80 each coordinate Na(+).

The protein belongs to the fluoride channel Fluc/FEX (TC 1.A.43) family.

The protein localises to the cell inner membrane. It carries out the reaction fluoride(in) = fluoride(out). With respect to regulation, na(+) is not transported, but it plays an essential structural role and its presence is essential for fluoride channel function. Functionally, fluoride-specific ion channel. Important for reducing fluoride concentration in the cell, thus reducing its toxicity. This is Fluoride-specific ion channel FluC from Helicobacter pylori (strain J99 / ATCC 700824) (Campylobacter pylori J99).